We begin with the raw amino-acid sequence, 419 residues long: Metacaspase-1B (419 aa).

The segment at 1-109 (MYHPNYNYPP…PPMEAQQFGK (109 aa)) is disordered. A compositionally biased stretch (pro residues) spans 33-50 (SPPPPQPYYSNGYPPPSQ). The span at 51-66 (SPHSYSPPQYPPHGQY) shows a compositional bias: low complexity. Polar residues predominate over residues 82–93 (QYRSYHSHSPSW). Residues H210 and C266 contribute to the active site.

The protein belongs to the peptidase C14B family.

In terms of biological role, involved in cell death (apoptosis). The sequence is that of Metacaspase-1B (casB) from Aspergillus oryzae (strain ATCC 42149 / RIB 40) (Yellow koji mold).